The chain runs to 308 residues: tRNA pseudouridine synthase B (308 aa).

The active-site Nucleophile is the Asp-47.

This sequence belongs to the pseudouridine synthase TruB family. Type 1 subfamily.

The enzyme catalyses uridine(55) in tRNA = pseudouridine(55) in tRNA. Its function is as follows. Responsible for synthesis of pseudouridine from uracil-55 in the psi GC loop of transfer RNAs. The polypeptide is tRNA pseudouridine synthase B (Xanthomonas campestris pv. campestris (strain B100)).